Consider the following 616-residue polypeptide: Dihydroxy-acid dehydratase (616 aa).

Position 81 (aspartate 81) interacts with Mg(2+). Cysteine 122 provides a ligand contact to [2Fe-2S] cluster. Mg(2+) is bound by residues aspartate 123 and lysine 124. An N6-carboxylysine modification is found at lysine 124. Residue cysteine 195 participates in [2Fe-2S] cluster binding. Residue glutamate 491 participates in Mg(2+) binding. The active-site Proton acceptor is serine 517.

The protein belongs to the IlvD/Edd family. Homodimer. It depends on [2Fe-2S] cluster as a cofactor. Mg(2+) is required as a cofactor.

It carries out the reaction (2R)-2,3-dihydroxy-3-methylbutanoate = 3-methyl-2-oxobutanoate + H2O. The catalysed reaction is (2R,3R)-2,3-dihydroxy-3-methylpentanoate = (S)-3-methyl-2-oxopentanoate + H2O. It participates in amino-acid biosynthesis; L-isoleucine biosynthesis; L-isoleucine from 2-oxobutanoate: step 3/4. The protein operates within amino-acid biosynthesis; L-valine biosynthesis; L-valine from pyruvate: step 3/4. Functionally, functions in the biosynthesis of branched-chain amino acids. Catalyzes the dehydration of (2R,3R)-2,3-dihydroxy-3-methylpentanoate (2,3-dihydroxy-3-methylvalerate) into 2-oxo-3-methylpentanoate (2-oxo-3-methylvalerate) and of (2R)-2,3-dihydroxy-3-methylbutanoate (2,3-dihydroxyisovalerate) into 2-oxo-3-methylbutanoate (2-oxoisovalerate), the penultimate precursor to L-isoleucine and L-valine, respectively. The sequence is that of Dihydroxy-acid dehydratase from Escherichia coli O1:K1 / APEC.